The sequence spans 450 residues: Phosphoglucosamine mutase (450 aa).

Ser101 acts as the Phosphoserine intermediate in catalysis. The Mg(2+) site is built by Ser101, Asp242, Asp244, and Asp246. The residue at position 101 (Ser101) is a Phosphoserine.

The protein belongs to the phosphohexose mutase family. Mg(2+) serves as cofactor. In terms of processing, activated by phosphorylation.

It carries out the reaction alpha-D-glucosamine 1-phosphate = D-glucosamine 6-phosphate. Its function is as follows. Catalyzes the conversion of glucosamine-6-phosphate to glucosamine-1-phosphate. This is Phosphoglucosamine mutase from Rhodopseudomonas palustris (strain BisA53).